The sequence spans 210 residues: Protein GrpE (210 aa).

The disordered stretch occupies residues 1 to 31 (MAKDPQTPTDEELARAERDAEPQPGDATDDE). Residues 12–21 (ELARAERDAE) show a composition bias toward basic and acidic residues.

This sequence belongs to the GrpE family. Homodimer.

The protein localises to the cytoplasm. Functionally, participates actively in the response to hyperosmotic and heat shock by preventing the aggregation of stress-denatured proteins, in association with DnaK and GrpE. It is the nucleotide exchange factor for DnaK and may function as a thermosensor. Unfolded proteins bind initially to DnaJ; upon interaction with the DnaJ-bound protein, DnaK hydrolyzes its bound ATP, resulting in the formation of a stable complex. GrpE releases ADP from DnaK; ATP binding to DnaK triggers the release of the substrate protein, thus completing the reaction cycle. Several rounds of ATP-dependent interactions between DnaJ, DnaK and GrpE are required for fully efficient folding. In Chromohalobacter salexigens (strain ATCC BAA-138 / DSM 3043 / CIP 106854 / NCIMB 13768 / 1H11), this protein is Protein GrpE.